The chain runs to 502 residues: DnaJ homolog subfamily C member 3 homolog (502 aa).

Residues 1 to 25 (MIVNKKYFLLICIIILISINCLVLA) form the signal peptide. TPR repeat units lie at residues 29–62 (IENF…IGSD), 69–102 (VSLL…NPDN), 103–136 (IHAR…RPDN), 184–217 (KEVR…EPSS), 218–251 (VAAL…DPDN), 264–297 (FEKS…EPNS), 302–335 (TPLY…DELN), and 336–369 (ADAL…KPND). Asparagine 51 is a glycosylation site (N-linked (GlcNAc...) asparagine). Cysteine 309 and cysteine 325 are oxidised to a cystine. The J domain occupies 390-457 (DYYKILGIQK…EKRKRYDMGE (68 aa)).

The protein resides in the secreted. Its subcellular location is the endoplasmic reticulum lumen. Functionally, may be involved in the unfolded protein response (UPR) during ER stress. This Dictyostelium discoideum (Social amoeba) protein is DnaJ homolog subfamily C member 3 homolog (dnajc3).